The sequence spans 254 residues: 7-cyano-7-deazaguanine synthase (254 aa).

30–40 contacts ATP; that stretch reads YSGGQDSATCL. Positions 218, 233, 236, and 239 each coordinate Zn(2+).

The protein belongs to the QueC family. Zn(2+) serves as cofactor.

It catalyses the reaction 7-carboxy-7-deazaguanine + NH4(+) + ATP = 7-cyano-7-deazaguanine + ADP + phosphate + H2O + H(+). It participates in purine metabolism; 7-cyano-7-deazaguanine biosynthesis. Its function is as follows. Catalyzes the ATP-dependent conversion of 7-carboxy-7-deazaguanine (CDG) to 7-cyano-7-deazaguanine (preQ(0)). The chain is 7-cyano-7-deazaguanine synthase from Zymomonas mobilis subsp. mobilis (strain ATCC 31821 / ZM4 / CP4).